The primary structure comprises 446 residues: MEDFKTIACNIFIIWLTLVIVLILLPSMFGSSLGISEVYMKILVKVLEWATLRIQKGFKDKEKLSASNGIIQRDKSPMETEIECLRQSRSQDIREGDFELGDVFYFAKKGFEAIVEDEVTQRFSSEELISWNLLTRTNNNFHYVSLRVTLIWVLGLCVRYCILLPLRITLATIGISWLVLGATLVGQLPNSRMKSWFSELVHLMCCRICARALSSAIQYHNKENKPKKGGICVANHTSPIDIIILANDGCYAMVGQVHGGLMGIIQRAMARACPHVWFERSEMRDRHLVTERLREHVSDKSKLPILIFPEGTCINNTSVMMFKKGSFEIGGTIYPVAIKYDPQFGDAFWNSSKNSMVSYLLRMMTSWALKCNVWYLPPVNRQDGEDAVQFANRVKSAIAKQGGLVELPWDGGLKRGKVKDSFKEEQQKNYSRIIAGENKSLKPTTH.

3 helical membrane passes run 11–31 (IFII…MFGS), 146–166 (LRVT…LLPL), and 168–188 (ITLA…VGQL). The short motif at 236–241 (HTSPID) is the HXXXXD motif element.

This sequence belongs to the 1-acyl-sn-glycerol-3-phosphate acyltransferase family.

The protein resides in the endoplasmic reticulum membrane. The catalysed reaction is sn-glycerol 3-phosphate + an acyl-CoA = a 1-acyl-sn-glycero-3-phosphate + CoA. The enzyme catalyses a 1-acyl-sn-glycero-3-phosphate + an acyl-CoA = a 1,2-diacyl-sn-glycero-3-phosphate + CoA. It catalyses the reaction dodecanoyl-CoA + sn-glycerol 3-phosphate = 1-dodecanoyl-sn-glycerol 3-phosphate + CoA. It carries out the reaction sn-glycerol 3-phosphate + hexadecanoyl-CoA = 1-hexadecanoyl-sn-glycero-3-phosphate + CoA. The catalysed reaction is sn-glycerol 3-phosphate + (9Z)-octadecenoyl-CoA = 1-(9Z-octadecenoyl)-sn-glycero-3-phosphate + CoA. The enzyme catalyses (9Z,12Z)-octadecadienoyl-CoA + sn-glycerol 3-phosphate = 1-(9Z,12Z)-octadecadienoyl-sn-glycero-3-phosphate + CoA. It catalyses the reaction 1-tetradecanoyl-sn-glycerol 3-phosphate + (9Z)-octadecenoyl-CoA = 1-tetradecanoyl-2-(9Z)-octadecenoyl-sn-glycero-3-phosphate + CoA. It carries out the reaction 1-hexadecanoyl-sn-glycero-3-phosphate + (9Z)-octadecenoyl-CoA = 1-hexadecanoyl-2-(9Z-octadecenoyl)-sn-glycero-3-phosphate + CoA. The catalysed reaction is 1-(9Z-octadecenoyl)-sn-glycero-3-phosphate + (9Z)-octadecenoyl-CoA = 1,2-di-(9Z-octadecenoyl)-sn-glycero-3-phosphate + CoA. The enzyme catalyses 1-(6Z,9Z,12Z-octadecatrienoyl)-sn-glycero-3-phosphate + (9Z)-octadecenoyl-CoA = (6Z,9Z,12Z)-octadecatrienoyl-2-(9Z)-octadecenoyl-sn-glycero-3-phosphate + CoA. It catalyses the reaction 1-(9Z,12Z,15Z)-octadecatrienoyl-sn-glycero-3-phosphate + (9Z)-octadecenoyl-CoA = 1-(9Z,12Z,15Z)-octadecatrienoyl-2-(9Z)-octadecenoyl-sn-glycero-3-phosphate + CoA. It carries out the reaction 1-(9Z-octadecenoyl)-sn-glycero-3-phosphate + tetradecanoyl-CoA = 1-(9Z)-octadecenoyl-2-tetradecanoyl-sn-glycero-3-phosphate + CoA. The catalysed reaction is 1-(9Z-octadecenoyl)-sn-glycero-3-phosphate + hexadecanoyl-CoA = 1-(9Z)-octadecenoyl-2-hexadecanoyl-sn-glycero-3-phosphate + CoA. The enzyme catalyses 1-(9Z-octadecenoyl)-sn-glycero-3-phosphate + octadecanoyl-CoA = 1-(9Z-octadecenoyl)-2-octadecanoyl-sn-glycero-3-phosphate + CoA. It catalyses the reaction 1-(9Z-octadecenoyl)-sn-glycero-3-phosphate + (9Z,12Z)-octadecadienoyl-CoA = 1-(9Z)-octadecenoyl-2-(9Z,12Z)-octadecadienoyl-sn-glycero-3-phosphate + CoA. It carries out the reaction 1-(5Z,8Z,11Z,14Z-eicosatetraenoyl)-sn-glycero-3-phosphate + (9Z)-octadecenoyl-CoA = 1-(5Z,8Z,11Z,14Z)-eicosatetraenoyl-2-(9Z)-octadecenoyl-sn-glycero-3-phosphate + CoA. Its pathway is glycerolipid metabolism; triacylglycerol biosynthesis. It functions in the pathway phospholipid metabolism; CDP-diacylglycerol biosynthesis; CDP-diacylglycerol from sn-glycerol 3-phosphate: step 1/3. In terms of biological role, converts glycerol-3-phosphate to 1-acyl-sn-glycerol-3-phosphate (lysophosphatidic acid or LPA) by incorporating an acyl moiety at the sn-1 position of the glycerol backbone. Also converts LPA into 1,2-diacyl-sn-glycerol-3-phosphate (phosphatidic acid or PA) by incorporating an acyl moiety at the sn-2 position of the glycerol backbone. Protects cells against lipotoxicity. The chain is Glycerol-3-phosphate acyltransferase 3 from Xenopus laevis (African clawed frog).